The chain runs to 992 residues: Tubulin glycylase 3A (992 aa).

2 disordered regions span residues 1–54 (MQTR…NRVV) and 68–113 (QSDS…LGAP). A compositionally biased stretch (basic and acidic residues) spans 7–26 (SEPHRSRDQVTDGDRNRDQP). Residues 39 to 49 (VTPPAAPPPTP) show a composition bias toward pro residues. The region spanning 295–645 (FKLTACVAFL…RRTDPKAELG (351 aa)) is the TTL domain. ATP-binding positions include 457–460 (QKYI), Lys470, and Asp472. 2 disordered regions span residues 746–766 (SLCSQLPQKSPSAAPALTATP) and 791–828 (KRNTGGSLSGEQVQSTALPPKRQRSCGPRLSSTNPVES). Over residues 794–807 (TGGSLSGEQVQSTA) the composition is skewed to polar residues.

It localises to the cytoplasm. It is found in the cytoskeleton. Functionally, polylycylase which modifies alpha- and beta-tubulin, generating side chains of glycine on the gamma-carboxyl groups of specific glutamate residues within the C-terminal tail of alpha- and beta-tubulin. Involved both in the side-chain initiation and elongation steps of the polyglycylation reaction by adding a single glycine chain to generate monoglycine side chains and by elongating monoglycine side chains to polyglycine side chains. In Drosophila melanogaster (Fruit fly), this protein is Tubulin glycylase 3A (TTLL3A).